We begin with the raw amino-acid sequence, 338 residues long: Glyceraldehyde-3-phosphate dehydrogenase (338 aa).

NAD(+) contacts are provided by residues 12–13, Asp-34, and Arg-79; that span reads RI. D-glyceraldehyde 3-phosphate is bound by residues 150 to 152, Thr-181, 210 to 211, and Arg-233; these read SCT and TG. The active-site Nucleophile is the Cys-151. Asn-316 lines the NAD(+) pocket.

The protein belongs to the glyceraldehyde-3-phosphate dehydrogenase family. Homotetramer.

It is found in the cytoplasm. The catalysed reaction is D-glyceraldehyde 3-phosphate + phosphate + NAD(+) = (2R)-3-phospho-glyceroyl phosphate + NADH + H(+). Its pathway is carbohydrate degradation; glycolysis; pyruvate from D-glyceraldehyde 3-phosphate: step 1/5. The chain is Glyceraldehyde-3-phosphate dehydrogenase (GPD) from Yarrowia lipolytica (strain CLIB 122 / E 150) (Yeast).